Reading from the N-terminus, the 69-residue chain is uncharacterized protein (69 aa).

This is an uncharacterized protein from Salmonella paratyphi A (strain ATCC 9150 / SARB42).